Here is a 616-residue protein sequence, read N- to C-terminus: Chaperone protein HscA (616 aa).

This sequence belongs to the heat shock protein 70 family.

Its function is as follows. Chaperone involved in the maturation of iron-sulfur cluster-containing proteins. Has a low intrinsic ATPase activity which is markedly stimulated by HscB. Involved in the maturation of IscU. The chain is Chaperone protein HscA from Photorhabdus laumondii subsp. laumondii (strain DSM 15139 / CIP 105565 / TT01) (Photorhabdus luminescens subsp. laumondii).